The following is a 361-amino-acid chain: Peptide chain release factor 1 (361 aa).

N5-methylglutamine is present on Gln237. Residues 286-306 (AKQDQEQAAKRKSLVGSGDRS) form a disordered region.

This sequence belongs to the prokaryotic/mitochondrial release factor family. Post-translationally, methylated by PrmC. Methylation increases the termination efficiency of RF1.

The protein localises to the cytoplasm. Peptide chain release factor 1 directs the termination of translation in response to the peptide chain termination codons UAG and UAA. In Coxiella burnetii (strain CbuG_Q212) (Coxiella burnetii (strain Q212)), this protein is Peptide chain release factor 1.